A 93-amino-acid chain; its full sequence is uncharacterized protein (93 aa).

The protein resides in the plastid. The protein localises to the chloroplast. This is an uncharacterized protein from Diacronema lutheri (Unicellular marine alga).